Reading from the N-terminus, the 489-residue chain is N-succinylglutamate 5-semialdehyde dehydrogenase (489 aa).

An NAD(+)-binding site is contributed by 224–229; sequence GSAKVG. Active-site residues include Glu-247 and Cys-281.

It belongs to the aldehyde dehydrogenase family. AstD subfamily.

It carries out the reaction N-succinyl-L-glutamate 5-semialdehyde + NAD(+) + H2O = N-succinyl-L-glutamate + NADH + 2 H(+). It participates in amino-acid degradation; L-arginine degradation via AST pathway; L-glutamate and succinate from L-arginine: step 4/5. Functionally, catalyzes the NAD-dependent reduction of succinylglutamate semialdehyde into succinylglutamate. The protein is N-succinylglutamate 5-semialdehyde dehydrogenase of Chromohalobacter salexigens (strain ATCC BAA-138 / DSM 3043 / CIP 106854 / NCIMB 13768 / 1H11).